Here is a 122-residue protein sequence, read N- to C-terminus: S-protein homolog 23 (122 aa).

Residues 1 to 20 (MQNLSILLVCSFCILGHVSS) form the signal peptide. A glycan (N-linked (GlcNAc...) asparagine) is linked at Asn-86.

This sequence belongs to the plant self-incompatibility (S1) protein family.

Its subcellular location is the secreted. This chain is S-protein homolog 23, found in Arabidopsis thaliana (Mouse-ear cress).